The chain runs to 601 residues: Putative Lon protease homolog (601 aa).

The region spanning 363–560 (GEIVGQINGL…YQACELLFGR (198 aa)) is the Lon proteolytic domain. Catalysis depends on residues S455 and K498.

Belongs to the peptidase S16 family.

The sequence is that of Putative Lon protease homolog from Haemophilus influenzae (strain ATCC 51907 / DSM 11121 / KW20 / Rd).